The primary structure comprises 412 residues: Chorismate synthase (412 aa).

Residues Arg40 and Arg46 each contribute to the NADP(+) site. Residues 135 to 137 (RAS), 256 to 257 (QA), Gly300, 315 to 319 (KPIST), and Arg341 each bind FMN. The span at 391 to 404 (QREPRQESSDEQPA) shows a compositional bias: basic and acidic residues. The disordered stretch occupies residues 391-412 (QREPRQESSDEQPARRAANTAG).

This sequence belongs to the chorismate synthase family. In terms of assembly, homotetramer. FMNH2 serves as cofactor.

It catalyses the reaction 5-O-(1-carboxyvinyl)-3-phosphoshikimate = chorismate + phosphate. Its pathway is metabolic intermediate biosynthesis; chorismate biosynthesis; chorismate from D-erythrose 4-phosphate and phosphoenolpyruvate: step 7/7. Functionally, catalyzes the anti-1,4-elimination of the C-3 phosphate and the C-6 proR hydrogen from 5-enolpyruvylshikimate-3-phosphate (EPSP) to yield chorismate, which is the branch point compound that serves as the starting substrate for the three terminal pathways of aromatic amino acid biosynthesis. This reaction introduces a second double bond into the aromatic ring system. The chain is Chorismate synthase from Mycobacteroides abscessus (strain ATCC 19977 / DSM 44196 / CCUG 20993 / CIP 104536 / JCM 13569 / NCTC 13031 / TMC 1543 / L948) (Mycobacterium abscessus).